Reading from the N-terminus, the 187-residue chain is Elongation factor P (187 aa).

The protein belongs to the elongation factor P family.

Its subcellular location is the cytoplasm. It functions in the pathway protein biosynthesis; polypeptide chain elongation. Its function is as follows. Involved in peptide bond synthesis. Stimulates efficient translation and peptide-bond synthesis on native or reconstituted 70S ribosomes in vitro. Probably functions indirectly by altering the affinity of the ribosome for aminoacyl-tRNA, thus increasing their reactivity as acceptors for peptidyl transferase. This chain is Elongation factor P, found in Chelativorans sp. (strain BNC1).